The chain runs to 293 residues: Acetylglutamate kinase (293 aa).

Residues 68-69 (GG), Arg90, and Asn189 each bind substrate.

It belongs to the acetylglutamate kinase family. ArgB subfamily.

The protein localises to the cytoplasm. It catalyses the reaction N-acetyl-L-glutamate + ATP = N-acetyl-L-glutamyl 5-phosphate + ADP. Its pathway is amino-acid biosynthesis; L-arginine biosynthesis; N(2)-acetyl-L-ornithine from L-glutamate: step 2/4. Catalyzes the ATP-dependent phosphorylation of N-acetyl-L-glutamate. The polypeptide is Acetylglutamate kinase (Mycobacterium marinum (strain ATCC BAA-535 / M)).